A 921-amino-acid chain; its full sequence is MEYKNTLLMPKTEFPMRGNLPKREPAMQEKWAEMNIYEKVQEHTKGRPLFVLHDGPPYANGDIHMGHALNKVLKDFIVRYKSMTGFCAPYVPGWDTHGLPIEQALTNKGVKRKEMTVAEFRKLCAEYAYEQVERQREQFKRLGVRADWDNPYITLEPAYEAQQIKVFGDMAKKGYIYKGQKPVYWSPTSESALAEAEIEYQDKKSASIYVAFPVKDGKNVLEGDEKYIIWTTTPWTLPANLGISVHPELEYAIVKVNDEKYIIASELFETVAKTLEWENAEVVKTVKGSELEYTVAKHPFYDRDSLVMLGDHVTTDAGTGCVHTAPGHGEDDFVVGKKYGLEVLCPVDDKGVLTEEAPGFEGLFYDKANKPITEKLEEVGALLKLTFITHSYPHDWRTKKPIIFRATAQWFASIEAFRKELLEAVAETKWVPAWGETRLHNMVRDRGDWCISRQRAWGVPIPVFYAENGDPIITDETINHVADLFREHGSNVWFEREAKDLLPEGFTHPGSPNGEFRKETDIMDVWFDSGSSHQAVLEERDDLQRPADLYLEGSDQYRGWFNSSLSTAVAVTGKAPYKGVLSHGFVLDGEGRKMSKSIGNIVVPKKIMDQLGGDILRLWVSSVDYQSDVRISDDILKQVAEVYRKIRNTFRFLLGNLDDFKPSENTVAVAELREVDRYMLVKLNDLITKVKEAYETYDFAAVYHAIHNFCTIDLSSFYLDFAKDILYIEGANHEDRRAIQTVLYDVLVALTKLVTPILPHTADEVWPYIPGVTEESVQLTDMPEAVQLDDAEALKTKWDAFMTLRDDVLKALEVARNEKVIGKSLNASITLYPTAEMKAMLESINEDLKQLFIVSEYKLGGMMEEAPADAPKYEHTAVVVAQATGETCERCWVVSETIGKDAEHETLCERCATVVKENYVK.

A 'HIGH' region motif is present at residues 57–67; that stretch reads PYANGDIHMGH. Residue Glu-552 coordinates L-isoleucyl-5'-AMP. Positions 593-597 match the 'KMSKS' region motif; the sequence is KMSKS. Lys-596 is an ATP binding site. Cys-888, Cys-891, Cys-908, and Cys-911 together coordinate Zn(2+).

This sequence belongs to the class-I aminoacyl-tRNA synthetase family. IleS type 1 subfamily. In terms of assembly, monomer. Zn(2+) serves as cofactor.

It is found in the cytoplasm. The enzyme catalyses tRNA(Ile) + L-isoleucine + ATP = L-isoleucyl-tRNA(Ile) + AMP + diphosphate. Catalyzes the attachment of isoleucine to tRNA(Ile). As IleRS can inadvertently accommodate and process structurally similar amino acids such as valine, to avoid such errors it has two additional distinct tRNA(Ile)-dependent editing activities. One activity is designated as 'pretransfer' editing and involves the hydrolysis of activated Val-AMP. The other activity is designated 'posttransfer' editing and involves deacylation of mischarged Val-tRNA(Ile). The polypeptide is Isoleucine--tRNA ligase 1 (Bacillus thuringiensis subsp. konkukian (strain 97-27)).